Here is a 341-residue protein sequence, read N- to C-terminus: DNA-directed RNA polymerase subunit alpha (341 aa).

An alpha N-terminal domain (alpha-NTD) region spans residues 1–233 (MIQDEVPVSA…DLFLPFLHTE (233 aa)). The tract at residues 262–341 (DRMAKEVAFK…NLPRNKFSID (80 aa)) is alpha C-terminal domain (alpha-CTD).

The protein belongs to the RNA polymerase alpha chain family. In plastids the minimal PEP RNA polymerase catalytic core is composed of four subunits: alpha, beta, beta', and beta''. When a (nuclear-encoded) sigma factor is associated with the core the holoenzyme is formed, which can initiate transcription.

The protein resides in the plastid. It is found in the chloroplast. It carries out the reaction RNA(n) + a ribonucleoside 5'-triphosphate = RNA(n+1) + diphosphate. Its function is as follows. DNA-dependent RNA polymerase catalyzes the transcription of DNA into RNA using the four ribonucleoside triphosphates as substrates. This chain is DNA-directed RNA polymerase subunit alpha, found in Angiopteris evecta (Mule's foot fern).